The sequence spans 487 residues: MSDDAEVTNNKKTTKSTLLDGNHIFPPFYACYLLRSKATANSNRTYVGSTPDPPRRIRQHNGELKQGAWSTSRHRPWEMQMIVYGFPSKLAALQFEWAWQKPELSRHLRIRGEDQEYYHIFTKDARRNWVERKVCVAYALISLTPFNRLPLHVRFFNHETHGIWQSIHEQAGVNTIQRGKSRAKPVNPLHLLSQSVAPAVTIILDLGGVSGTSGKRRECTKGVMSHEGPIDVKDVEFRQGFGVRGKWLEIRKRILSGQDLCCHLCQERIAFNDHLTFSICPLAESQDCFCITHLICLAKHFQDEAPVEDRRAPSQPKILPYQGLCPNCKRTVQWGQHIRACYARKEQVEKAEKAEKAEKAEKAEKAEKAEKAEKAEKAEKAGRKVRQREMKTKKGDQSNGTVAQPESIYSATPVHTTFGLSNASATLIDPSMPARSMKSKDVGGEGIRHSTHTDDSDGIISVYSETEDESESEPEWEIFEAEMMALS.

The 83-residue stretch at 27 to 109 (PFYACYLLRS…QKPELSRHLR (83 aa)) folds into the GIY-YIG domain. The tract at residues 44–69 (RTYVGSTPDPPRRIRQHNGELKQGAW) is disordered. The SLX1-type zinc-finger motif lies at 262–328 (CHLCQERIAF…LPYQGLCPNC (67 aa)). The span at 359-396 (KAEKAEKAEKAEKAEKAEKAEKAGRKVRQREMKTKKGD) shows a compositional bias: basic and acidic residues. Disordered regions lie at residues 359–407 (KAEK…QPES) and 433–475 (PARS…SEPE). Residues 397–407 (QSNGTVAQPES) are compositionally biased toward polar residues. Over residues 438–455 (KSKDVGGEGIRHSTHTDD) the composition is skewed to basic and acidic residues. Over residues 465-475 (ETEDESESEPE) the composition is skewed to acidic residues.

Belongs to the SLX1 family. Forms a heterodimer with SLX4. A divalent metal cation is required as a cofactor.

It localises to the nucleus. Functionally, catalytic subunit of the SLX1-SLX4 structure-specific endonuclease that resolves DNA secondary structures generated during DNA repair and recombination. Has endonuclease activity towards branched DNA substrates, introducing single-strand cuts in duplex DNA close to junctions with ss-DNA. This chain is Structure-specific endonuclease subunit SLX1, found in Cryptococcus neoformans var. neoformans serotype D (strain B-3501A) (Filobasidiella neoformans).